The following is a 209-amino-acid chain: Putative 3-methyladenine DNA glycosylase (209 aa).

The segment at 189–209 (YISKTQPGPPPKKRKKGLESS) is disordered. Residues 199 to 209 (PKKRKKGLESS) are compositionally biased toward basic residues.

Belongs to the DNA glycosylase MPG family.

This is Putative 3-methyladenine DNA glycosylase from Chlorobaculum tepidum (strain ATCC 49652 / DSM 12025 / NBRC 103806 / TLS) (Chlorobium tepidum).